The following is a 183-amino-acid chain: Putative 3-methyladenine DNA glycosylase (183 aa).

It belongs to the DNA glycosylase MPG family.

This Legionella pneumophila subsp. pneumophila (strain Philadelphia 1 / ATCC 33152 / DSM 7513) protein is Putative 3-methyladenine DNA glycosylase.